The sequence spans 187 residues: RNA 2',3'-cyclic phosphodiesterase (187 aa).

The active-site Proton donor is histidine 40. 2 consecutive short sequence motifs (HXTX) follow at residues 40 to 43 (HLTL) and 125 to 128 (HITI). The Proton acceptor role is filled by histidine 125.

The protein belongs to the 2H phosphoesterase superfamily. ThpR family.

It carries out the reaction a 3'-end 2',3'-cyclophospho-ribonucleotide-RNA + H2O = a 3'-end 2'-phospho-ribonucleotide-RNA + H(+). Hydrolyzes RNA 2',3'-cyclic phosphodiester to an RNA 2'-phosphomonoester. This chain is RNA 2',3'-cyclic phosphodiesterase, found in Thermotoga maritima (strain ATCC 43589 / DSM 3109 / JCM 10099 / NBRC 100826 / MSB8).